We begin with the raw amino-acid sequence, 873 residues long: Alanine--tRNA ligase (873 aa).

Zn(2+) contacts are provided by histidine 562, histidine 566, cysteine 663, and histidine 667.

The protein belongs to the class-II aminoacyl-tRNA synthetase family. Requires Zn(2+) as cofactor.

It is found in the cytoplasm. The enzyme catalyses tRNA(Ala) + L-alanine + ATP = L-alanyl-tRNA(Ala) + AMP + diphosphate. Functionally, catalyzes the attachment of alanine to tRNA(Ala) in a two-step reaction: alanine is first activated by ATP to form Ala-AMP and then transferred to the acceptor end of tRNA(Ala). Also edits incorrectly charged Ser-tRNA(Ala) and Gly-tRNA(Ala) via its editing domain. This chain is Alanine--tRNA ligase, found in Bordetella avium (strain 197N).